A 226-amino-acid chain; its full sequence is Triosephosphate isomerase (226 aa).

The Electrophile role is filled by histidine 91. The active-site Proton acceptor is glutamate 163. Residues glycine 169 and serine 207 each coordinate substrate.

The protein belongs to the triosephosphate isomerase family. As to quaternary structure, homodimer.

The protein resides in the cytoplasm. The catalysed reaction is D-glyceraldehyde 3-phosphate = dihydroxyacetone phosphate. It participates in carbohydrate biosynthesis; gluconeogenesis. It functions in the pathway carbohydrate degradation; glycolysis; D-glyceraldehyde 3-phosphate from glycerone phosphate: step 1/1. In terms of biological role, involved in the gluconeogenesis. Catalyzes stereospecifically the conversion of dihydroxyacetone phosphate (DHAP) to D-glyceraldehyde-3-phosphate (G3P). In Rhizobium etli (strain ATCC 51251 / DSM 11541 / JCM 21823 / NBRC 15573 / CFN 42), this protein is Triosephosphate isomerase.